The sequence spans 106 residues: MNKIRKGDEVIVLTGRDKGKRGTVSLRKDDSYLVIDGINLVKKHVKPNPMKGTTGGIVEKAMPIHQSNVAIFNAATGKADRVGIKVQADGSRVRVFKSSGAEIKAA.

It belongs to the universal ribosomal protein uL24 family. Part of the 50S ribosomal subunit.

One of two assembly initiator proteins, it binds directly to the 5'-end of the 23S rRNA, where it nucleates assembly of the 50S subunit. Functionally, one of the proteins that surrounds the polypeptide exit tunnel on the outside of the subunit. This Paracidovorax citrulli (strain AAC00-1) (Acidovorax citrulli) protein is Large ribosomal subunit protein uL24.